Consider the following 165-residue polypeptide: V-type proton ATPase subunit c2 (165 aa).

The Lumenal segment spans residues 1–12; that stretch reads MASTFSGDETAP. A helical membrane pass occupies residues 13-33; the sequence is FFGFLGAAAALVFSCMGAAYG. Residues 34-55 lie on the Cytoplasmic side of the membrane; that stretch reads TAKSGVGVASMGVMRPELVMKS. A helical membrane pass occupies residues 56–76; the sequence is IVPVVMAGVLGIYGLIIAVII. The Lumenal segment spans residues 77 to 95; that stretch reads STGINPKAKSYYLFDGYAH. The chain crosses the membrane as a helical span at residues 96 to 117; sequence LSSGLACGLAGLSAGMAIGIVG. Residues 118–129 are Cytoplasmic-facing; the sequence is DAGVRANAQQPK. The chain crosses the membrane as a helical span at residues 130-155; the sequence is LFVGMILILIFAEALALYGLIVGIIL. At 156–165 the chain is on the lumenal side; the sequence is SSRAGQSRAE.

This sequence belongs to the V-ATPase proteolipid subunit family. As to quaternary structure, V-ATPase is a heteromultimeric enzyme composed of a peripheral catalytic V1 complex (components A to H) attached to an integral membrane V0 proton pore complex (components: a, c, c'', d and e). The proteolipid components c and c'' are present as a hexameric ring that forms the proton-conducting pore. Expressed in leaf, root, flower and silique, with lower expression in roots.

It localises to the vacuole membrane. Functionally, proton-conducting pore forming subunit of the membrane integral V0 complex of vacuolar ATPase. V-ATPase is responsible for acidifying a variety of intracellular compartments in eukaryotic cells. The protein is V-type proton ATPase subunit c2 (VHA-c2) of Arabidopsis thaliana (Mouse-ear cress).